A 210-amino-acid polypeptide reads, in one-letter code: 3-hexulose-6-phosphate synthase (210 aa).

Belongs to the HPS/KGPDC family. HPS subfamily.

It catalyses the reaction D-ribulose 5-phosphate + formaldehyde = D-arabino-hex-3-ulose 6-phosphate. It participates in one-carbon metabolism; formaldehyde assimilation via RuMP pathway; D-fructose 6-phosphate from D-ribulose 5-phosphate and formaldehyde: step 1/2. Functionally, catalyzes the condensation of ribulose 5-phosphate with formaldehyde to form 3-hexulose 6-phosphate. This chain is 3-hexulose-6-phosphate synthase, found in Staphylococcus aureus (strain bovine RF122 / ET3-1).